The chain runs to 492 residues: Catalase isozyme 1 (492 aa).

Catalysis depends on residues His-65 and Asn-138. Tyr-348 provides a ligand contact to heme.

It belongs to the catalase family. Homotetramer. Heme is required as a cofactor.

The protein localises to the cytoplasm. It is found in the cytosol. Its subcellular location is the peroxisome matrix. It carries out the reaction 2 H2O2 = O2 + 2 H2O. Inhibited by salicylic acid. Functionally, catalyzes the degradation of hydrogen peroxide (H(2)O(2)) generated by peroxisomal oxidases to water and oxygen, thereby protecting cells from the toxic effects of hydrogen peroxide. The polypeptide is Catalase isozyme 1 (CAT-1) (Nicotiana tabacum (Common tobacco)).